The primary structure comprises 184 residues: ATP synthase subunit b, chloroplastic (184 aa).

Residues 29–49 (INIINLGIVIGLLVYLGEGVL) form a helical membrane-spanning segment.

The protein belongs to the ATPase B chain family. As to quaternary structure, F-type ATPases have 2 components, F(1) - the catalytic core - and F(0) - the membrane proton channel. F(1) has five subunits: alpha(3), beta(3), gamma(1), delta(1), epsilon(1). F(0) has four main subunits: a(1), b(1), b'(1) and c(10-14). The alpha and beta chains form an alternating ring which encloses part of the gamma chain. F(1) is attached to F(0) by a central stalk formed by the gamma and epsilon chains, while a peripheral stalk is formed by the delta, b and b' chains.

It is found in the plastid. The protein resides in the chloroplast thylakoid membrane. F(1)F(0) ATP synthase produces ATP from ADP in the presence of a proton or sodium gradient. F-type ATPases consist of two structural domains, F(1) containing the extramembraneous catalytic core and F(0) containing the membrane proton channel, linked together by a central stalk and a peripheral stalk. During catalysis, ATP synthesis in the catalytic domain of F(1) is coupled via a rotary mechanism of the central stalk subunits to proton translocation. In terms of biological role, component of the F(0) channel, it forms part of the peripheral stalk, linking F(1) to F(0). This chain is ATP synthase subunit b, chloroplastic, found in Psilotum nudum (Whisk fern).